Consider the following 24-residue polypeptide: Acetylcholine receptor subunit alpha (24 aa).

It belongs to the ligand-gated ion channel (TC 1.A.9) family. Acetylcholine receptor (TC 1.A.9.1) subfamily. Alpha-1/CHRNA1 sub-subfamily. One of the alpha chains that assemble within the acetylcholine receptor, a pentamer of two alpha chains, a beta, a delta, and a gamma or epsilon chains.

It is found in the postsynaptic cell membrane. Its subcellular location is the cell membrane. The enzyme catalyses K(+)(in) = K(+)(out). It catalyses the reaction Na(+)(in) = Na(+)(out). In terms of biological role, upon acetylcholine binding, the AChR responds by an extensive change in conformation that affects all subunits and leads to opening of an ion-conducting channel across the plasma membrane. This is Acetylcholine receptor subunit alpha (chrna1) from Electrophorus electricus (Electric eel).